A 153-amino-acid polypeptide reads, in one-letter code: Ribosome maturation factor RimP (153 aa).

Belongs to the RimP family.

It localises to the cytoplasm. Its function is as follows. Required for maturation of 30S ribosomal subunits. This chain is Ribosome maturation factor RimP, found in Coxiella burnetii (strain RSA 331 / Henzerling II).